Here is a 512-residue protein sequence, read N- to C-terminus: ATP synthase subunit alpha (512 aa).

169–176 lines the ATP pocket; that stretch reads GDRQTGKT.

Belongs to the ATPase alpha/beta chains family. As to quaternary structure, F-type ATPases have 2 components, CF(1) - the catalytic core - and CF(0) - the membrane proton channel. CF(1) has five subunits: alpha(3), beta(3), gamma(1), delta(1), epsilon(1). CF(0) has four main subunits: a(1), b(1), b'(1) and c(9-12).

The protein resides in the cell inner membrane. The catalysed reaction is ATP + H2O + 4 H(+)(in) = ADP + phosphate + 5 H(+)(out). In terms of biological role, produces ATP from ADP in the presence of a proton gradient across the membrane. The alpha chain is a regulatory subunit. In Jannaschia sp. (strain CCS1), this protein is ATP synthase subunit alpha.